Reading from the N-terminus, the 282-residue chain is Caspase-3 (282 aa).

Residues His131 and Cys174 contribute to the active site.

The protein belongs to the peptidase C14A family. Heterotetramer that consists of two anti-parallel arranged heterodimers, each one formed by a 17 kDa (p17) and a 12 kDa (p12) subunit.

The protein resides in the cytoplasm. The catalysed reaction is Strict requirement for an Asp residue at positions P1 and P4. It has a preferred cleavage sequence of Asp-Xaa-Xaa-Asp-|- with a hydrophobic amino-acid residue at P2 and a hydrophilic amino-acid residue at P3, although Val or Ala are also accepted at this position.. Important mediator of apoptosis. At the onset of apoptosis, it proteolytically cleaves poly(ADP-ribose) polymerase PARP1 at a '216-Asp-|-Gly-217' bond. This chain is Caspase-3 (casp3), found in Xenopus laevis (African clawed frog).